We begin with the raw amino-acid sequence, 404 residues long: MHC class I-like protein MILL1 (404 aa).

Residues 1-30 form the signal peptide; that stretch reads MMLSRDLRAEAAVRLWIMFLLLEDLLGACA. An alpha-1 region spans residues 59–150; it reads EVAGPHTLRY…VTGQKGQDKG (92 aa). N-linked (GlcNAc...) asparagine glycosylation is found at Asn98, Asn102, and Asn165. The alpha-2 stretch occupies residues 151 to 242; sequence LHILQATLGC…SLRSEPLDTG (92 aa). 2 disulfides stabilise this stretch: Cys160–Cys223 and Cys262–Cys322. An Ig-like C1-type domain is found at 224 to 338; sequence PAQLQRHLAS…GNIEKRAVIV (115 aa). The alpha-3 stretch occupies residues 243 to 342; that stretch reads SPMVIVTFRN…KRAVIVNTVS (100 aa). A glycan (N-linked (GlcNAc...) asparagine) is linked at Asn323. Positions 343 to 373 are connecting peptide; sequence GEKTRQPSTSGVGGRVKKSLWTTMTTAFMVT. Residue Ser374 is the site of GPI-anchor amidated serine attachment. Positions 375–404 are cleaved as a propeptide — removed in mature form; it reads WTRKTGGDSTLLLLWWLLFFSTVLAVLTLV.

The protein belongs to the MHC class I family. In terms of assembly, heterodimer with B2M. Detected in skin, esophagus, tongue, skin, muscle, uterus, ovary, testis and epididymis.

The protein localises to the cell membrane. The chain is MHC class I-like protein MILL1 from Rattus norvegicus (Rat).